The sequence spans 152 residues: Large ribosomal subunit protein bL9 (152 aa).

It belongs to the bacterial ribosomal protein bL9 family.

In terms of biological role, binds to the 23S rRNA. This chain is Large ribosomal subunit protein bL9, found in Crocosphaera subtropica (strain ATCC 51142 / BH68) (Cyanothece sp. (strain ATCC 51142)).